Here is a 1040-residue protein sequence, read N- to C-terminus: Vitamin B12-dependent ribonucleotide reductase (1040 aa).

Substrate is bound by residues Ser-169, 213–214 (AC), Gly-242, 420–424 (NPCSE), and 604–608 (PTGTI). Cys-214 and Cys-433 form a disulfide bridge. The active-site Proton acceptor is Asn-420. Cys-422 (cysteine radical intermediate) is an active-site residue. Catalysis depends on Glu-424, which acts as the Proton acceptor. Disordered regions lie at residues 909–932 (SAEGAAKTGGNGPDLTTAPAGATA) and 969–988 (GSATNGHSNGQSAGGSSDGA). The segment covering 969-979 (GSATNGHSNGQ) has biased composition (polar residues).

It belongs to the ribonucleoside diphosphate reductase class-2 family. Requires adenosylcob(III)alamin as cofactor.

The catalysed reaction is a 2'-deoxyribonucleoside 5'-diphosphate + [thioredoxin]-disulfide + H2O = a ribonucleoside 5'-diphosphate + [thioredoxin]-dithiol. Functionally, catalyzes the reduction of ribonucleotides to deoxyribonucleotides. May function to provide a pool of deoxyribonucleotide precursors for DNA repair during oxygen limitation and/or for immediate growth after restoration of oxygen. This chain is Vitamin B12-dependent ribonucleotide reductase (nrdJ), found in Rhodopirellula baltica (strain DSM 10527 / NCIMB 13988 / SH1).